The following is a 378-amino-acid chain: Carbamoyl phosphate synthase small chain (378 aa).

Residues 1 to 188 (MLPSFPPAIL…LGRGYGVQDK (188 aa)) form a CPSase region. Residues S50, G240, and G242 each coordinate L-glutamine. One can recognise a Glutamine amidotransferase type-1 domain in the interval 192–378 (HVVAYDFGVK…FTAAMAERKQ (187 aa)). C268 functions as the Nucleophile in the catalytic mechanism. L-glutamine is bound by residues L269, Q272, N310, G312, and F313. Residues H352 and E354 contribute to the active site.

This sequence belongs to the CarA family. In terms of assembly, composed of two chains; the small (or glutamine) chain promotes the hydrolysis of glutamine to ammonia, which is used by the large (or ammonia) chain to synthesize carbamoyl phosphate. Tetramer of heterodimers (alpha,beta)4.

It catalyses the reaction hydrogencarbonate + L-glutamine + 2 ATP + H2O = carbamoyl phosphate + L-glutamate + 2 ADP + phosphate + 2 H(+). It carries out the reaction L-glutamine + H2O = L-glutamate + NH4(+). It functions in the pathway amino-acid biosynthesis; L-arginine biosynthesis; carbamoyl phosphate from bicarbonate: step 1/1. The protein operates within pyrimidine metabolism; UMP biosynthesis via de novo pathway; (S)-dihydroorotate from bicarbonate: step 1/3. Functionally, small subunit of the glutamine-dependent carbamoyl phosphate synthetase (CPSase). CPSase catalyzes the formation of carbamoyl phosphate from the ammonia moiety of glutamine, carbonate, and phosphate donated by ATP, constituting the first step of 2 biosynthetic pathways, one leading to arginine and/or urea and the other to pyrimidine nucleotides. The small subunit (glutamine amidotransferase) binds and cleaves glutamine to supply the large subunit with the substrate ammonia. The chain is Carbamoyl phosphate synthase small chain from Ralstonia nicotianae (strain ATCC BAA-1114 / GMI1000) (Ralstonia solanacearum).